Here is a 423-residue protein sequence, read N- to C-terminus: Gamma-glutamyl phosphate reductase (423 aa).

This sequence belongs to the gamma-glutamyl phosphate reductase family.

The protein resides in the cytoplasm. It carries out the reaction L-glutamate 5-semialdehyde + phosphate + NADP(+) = L-glutamyl 5-phosphate + NADPH + H(+). It functions in the pathway amino-acid biosynthesis; L-proline biosynthesis; L-glutamate 5-semialdehyde from L-glutamate: step 2/2. Catalyzes the NADPH-dependent reduction of L-glutamate 5-phosphate into L-glutamate 5-semialdehyde and phosphate. The product spontaneously undergoes cyclization to form 1-pyrroline-5-carboxylate. This Paraburkholderia phymatum (strain DSM 17167 / CIP 108236 / LMG 21445 / STM815) (Burkholderia phymatum) protein is Gamma-glutamyl phosphate reductase.